A 461-amino-acid polypeptide reads, in one-letter code: Cysteine--tRNA ligase (461 aa).

Residue Cys28 participates in Zn(2+) binding. The 'HIGH' region signature appears at 30–40 (ITVYDLCHIGH). Cys209, His234, and Glu238 together coordinate Zn(2+). The short motif at 266–270 (KMSKS) is the 'KMSKS' region element. An ATP-binding site is contributed by Lys269.

It belongs to the class-I aminoacyl-tRNA synthetase family. In terms of assembly, monomer. Zn(2+) serves as cofactor.

Its subcellular location is the cytoplasm. It carries out the reaction tRNA(Cys) + L-cysteine + ATP = L-cysteinyl-tRNA(Cys) + AMP + diphosphate. The protein is Cysteine--tRNA ligase of Escherichia coli (strain 55989 / EAEC).